Consider the following 343-residue polypeptide: Protein-glutamate methylesterase/protein-glutamine glutaminase 2 (343 aa).

A Response regulatory domain is found at 5–122 (KVLVVDDSAI…SVGDMSGQLV (118 aa)). Aspartate 56 carries the 4-aspartylphosphate modification. The CheB-type methylesterase domain maps to 154–343 (AETSNKVIAI…SIADEIVRMV (190 aa)). Catalysis depends on residues serine 166, histidine 192, and aspartate 288.

It belongs to the CheB family. In terms of processing, phosphorylated by CheA. Phosphorylation of the N-terminal regulatory domain activates the methylesterase activity.

Its subcellular location is the cytoplasm. It catalyses the reaction [protein]-L-glutamate 5-O-methyl ester + H2O = L-glutamyl-[protein] + methanol + H(+). The catalysed reaction is L-glutaminyl-[protein] + H2O = L-glutamyl-[protein] + NH4(+). In terms of biological role, involved in chemotaxis. Part of a chemotaxis signal transduction system that modulates chemotaxis in response to various stimuli. Catalyzes the demethylation of specific methylglutamate residues introduced into the chemoreceptors (methyl-accepting chemotaxis proteins or MCP) by CheR. Also mediates the irreversible deamidation of specific glutamine residues to glutamic acid. The polypeptide is Protein-glutamate methylesterase/protein-glutamine glutaminase 2 (Syntrophus aciditrophicus (strain SB)).